Consider the following 506-residue polypeptide: Histidine ammonia-lyase (506 aa).

A cross-link (5-imidazolinone (Ala-Gly)) is located at residues 143–145 (ASG). S144 is subject to 2,3-didehydroalanine (Ser).

It belongs to the PAL/histidase family. In terms of processing, contains an active site 4-methylidene-imidazol-5-one (MIO), which is formed autocatalytically by cyclization and dehydration of residues Ala-Ser-Gly.

It is found in the cytoplasm. The catalysed reaction is L-histidine = trans-urocanate + NH4(+). It participates in amino-acid degradation; L-histidine degradation into L-glutamate; N-formimidoyl-L-glutamate from L-histidine: step 1/3. This Salmonella agona (strain SL483) protein is Histidine ammonia-lyase.